A 1887-amino-acid chain; its full sequence is ATP-dependent DNA helicase tlh1 (1887 aa).

Residues 329-347 (NQQRREQQDKGENKKRQDD) are compositionally biased toward basic and acidic residues. Disordered stretches follow at residues 329-372 (NQQR…EEEE), 504-552 (ERKE…NTDD), and 1110-1135 (MVEGDKEKDKTNEEKNKDEVKAEMTQ). 2 stretches are compositionally biased toward acidic residues: residues 360-372 (LEDDEKDNDEEEE) and 524-533 (SAEDDNDNDN). A compositionally biased stretch (low complexity) spans 540–549 (NNNNNNNNTN). The span at 1112–1131 (EGDKEKDKTNEEKNKDEVKA) shows a compositional bias: basic and acidic residues. One can recognise a Helicase ATP-binding domain in the interval 1200–1375 (YFSLLNRMNL…RQTFCTNFYV (176 aa)). ATP is bound by residues 1213–1220 (LPTGGGKS) and 1240–1247 (MNMVTLVL). The DEAH box motif lies at 1322-1325 (DEAH). Residues 1401–1559 (DLRTLMKRTK…CVRSFLASEM (159 aa)) enclose the Helicase C-terminal domain. The interval 1613 to 1643 (YNASFSSSPPPQPGNSSGMSAMNTNTTSTTP) is disordered. The segment covering 1626–1642 (GNSSGMSAMNTNTTSTT) has biased composition (low complexity). A CCHC-type zinc finger spans residues 1804-1821 (STCYKCGKADHNLRECKL).

The protein belongs to the helicase family. RecQ subfamily.

It carries out the reaction Couples ATP hydrolysis with the unwinding of duplex DNA by translocating in the 3'-5' direction.. The catalysed reaction is ATP + H2O = ADP + phosphate + H(+). A probable ATP-dependent 3'-5' DNA helicase. Has a role in telomerase-independent telomere maintenance. The chain is ATP-dependent DNA helicase tlh1 from Schizosaccharomyces pombe (strain 972 / ATCC 24843) (Fission yeast).